The sequence spans 107 residues: Probable monothiol glutaredoxin 2 (107 aa).

The Glutaredoxin domain occupies Phe7–Arg107. Lys24 contributes to the glutathione binding site. Cys32 lines the [2Fe-2S] cluster pocket. Residues Arg61, Phe73, and Cys86–Asp87 contribute to the glutathione site.

The protein belongs to the glutaredoxin family. Monothiol subfamily.

This chain is Probable monothiol glutaredoxin 2 (grxC2), found in Rickettsia conorii (strain ATCC VR-613 / Malish 7).